The sequence spans 153 residues: ATP synthase subunit b' (153 aa).

A helical membrane pass occupies residues 20–40 (TLPLMAAQVVLLTFILNALFF).

The protein belongs to the ATPase B chain family. As to quaternary structure, F-type ATPases have 2 components, F(1) - the catalytic core - and F(0) - the membrane proton channel. F(1) has five subunits: alpha(3), beta(3), gamma(1), delta(1), epsilon(1). F(0) has four main subunits: a(1), b(1), b'(1) and c(10-14). The alpha and beta chains form an alternating ring which encloses part of the gamma chain. F(1) is attached to F(0) by a central stalk formed by the gamma and epsilon chains, while a peripheral stalk is formed by the delta, b and b' chains.

The protein resides in the cellular thylakoid membrane. F(1)F(0) ATP synthase produces ATP from ADP in the presence of a proton or sodium gradient. F-type ATPases consist of two structural domains, F(1) containing the extramembraneous catalytic core and F(0) containing the membrane proton channel, linked together by a central stalk and a peripheral stalk. During catalysis, ATP synthesis in the catalytic domain of F(1) is coupled via a rotary mechanism of the central stalk subunits to proton translocation. Its function is as follows. Component of the F(0) channel, it forms part of the peripheral stalk, linking F(1) to F(0). The b'-subunit is a diverged and duplicated form of b found in plants and photosynthetic bacteria. In Prochlorococcus marinus (strain SARG / CCMP1375 / SS120), this protein is ATP synthase subunit b'.